A 621-amino-acid polypeptide reads, in one-letter code: uncharacterized protein (621 aa).

It is found in the plastid. The protein resides in the chloroplast. This is an uncharacterized protein from Porphyra purpurea (Red seaweed).